The chain runs to 89 residues: Small ribosomal subunit protein uS14 (89 aa).

Belongs to the universal ribosomal protein uS14 family. As to quaternary structure, part of the 30S ribosomal subunit. Contacts proteins S3 and S10.

Functionally, binds 16S rRNA, required for the assembly of 30S particles and may also be responsible for determining the conformation of the 16S rRNA at the A site. The sequence is that of Small ribosomal subunit protein uS14 from Leuconostoc citreum (strain KM20).